The following is a 232-amino-acid chain: Ras association domain-containing protein 3 (232 aa).

Ser-2 carries the N-acetylserine modification. Residues 25–46 (RAPPGKSRSGQPDVEKEKETHN) form a disordered region. The span at 37–46 (DVEKEKETHN) shows a compositional bias: basic and acidic residues. In terms of domain architecture, Ras-associating spans 78-180 (YTGFIKVQME…TLSFVLREHE (103 aa)). An SARAH domain is found at 181–228 (IGEWEAFSLPELQNFLRILDKEEDEQLQSLKRRYTAYRQKLEEALGEV).

The protein resides in the cytoplasm. The protein localises to the cytoskeleton. The sequence is that of Ras association domain-containing protein 3 (Rassf3) from Mus musculus (Mouse).